Here is a 147-residue protein sequence, read N- to C-terminus: Large ribosomal subunit protein uL15 (147 aa).

It belongs to the universal ribosomal protein uL15 family. Part of the 50S ribosomal subunit.

Its function is as follows. Binds to the 23S rRNA. This Blochmanniella floridana protein is Large ribosomal subunit protein uL15.